Consider the following 337-residue polypeptide: MDEGFELRLIEALQPVRGFALAQGIYHLFNSGLYERLADGPQEVPGMSASLGLDASRTSGFLRYLANENYLALSGDTVALTEKGRALGPYRPWYELLVGGYAETFQQITDVLNGKGYATRDGRLVGIGSCGMSAYDALPLVRELMSDLPAAPASVVDLGCGDGTFLAGLVDGSGTVTGIGIDPYAPEESPAEGLRFVRSGATDYLREADTPESGPDSSQICLAAFLLQEVLEQEGRGAVVELVRAALRRSGHLAVVEVDHRPADPQVMRHGLGLAYYNPYYLLHVLTEQRLESDAFWRELFQEAGARVVTRRVADPRVDSTGLEVGYLLTRREGAAQ.

Belongs to the 2-ketoarginine methyltransferase family.

It catalyses the reaction 5-guanidino-2-oxopentanoate + S-adenosyl-L-methionine = (3R)-5-guanidino-3-methyl-2-oxopentanoate + S-adenosyl-L-homocysteine + H(+). It participates in antibiotic biosynthesis. Its function is as follows. S-adenosyl-L-methionine-dependent methyltransferase involved in the formation of the rare amino acid 3-methylarginine (MeArg), which is incorporated into the peptidyl nucleoside antibiotic arginomycin. Transfers the methyl group from S-adenosyl-L-methionine into 5-guanidino-2-oxopentanoate acid to yield 5-guanidino-3-methyl-2-oxopentanoate, a precursor of MeArg. The protein is 2-ketoarginine methyltransferase of Streptomyces arginensis.